Reading from the N-terminus, the 130-residue chain is Flagellar assembly factor FliW (130 aa).

This sequence belongs to the FliW family. As to quaternary structure, interacts with translational regulator CsrA and flagellin(s).

The protein localises to the cytoplasm. In terms of biological role, acts as an anti-CsrA protein, binds CsrA and prevents it from repressing translation of its target genes, one of which is flagellin. Binds to flagellin and participates in the assembly of the flagellum. The polypeptide is Flagellar assembly factor FliW (Borrelia hermsii (strain HS1 / DAH)).